Reading from the N-terminus, the 275-residue chain is MAIHLYKTSTPSTRNGAVDSQVKSNTRNNLIYGQHRCSKGRNARGIITARHRGGGHKRLYRKIDFRRNEKYIYGRIVTIEYDPNRNAYICLIHYGDGEKRYILHPRGAIIGDTIISGTEVPIKMGNALPLSTDMPLGTAIHNIEITLGRGGQLARAAGAVAKLIAKEGKSATLKLPSGEVRLISKNCSATVGQVGNAGVNQKSLGRAGSKCWLGKRPVVRGVVMNPVDHPHGGGEGRAPIGRKKPATPWGYPALGRRSRKRNKYSDNLILRRRSK.

2 disordered regions span residues Met1–Ser20 and Asn225–Lys275.

This sequence belongs to the universal ribosomal protein uL2 family. In terms of assembly, part of the 50S ribosomal subunit.

The protein localises to the plastid. It localises to the chloroplast. This chain is Large ribosomal subunit protein uL2cz (rpl2-A), found in Populus alba (White poplar).